The chain runs to 216 residues: Noggin-1 (216 aa).

The N-terminal stretch at M1–A18 is a signal peptide. The N-linked (GlcNAc...) asparagine glycan is linked to N55.

This sequence belongs to the noggin family. As to quaternary structure, homodimer; disulfide-linked.

The protein localises to the secreted. Inhibitor of bone morphogenetic proteins (BMP) signaling. May play an important role in the dorsoventral patterning of the embryo. This Danio rerio (Zebrafish) protein is Noggin-1 (nog1).